Here is a 498-residue protein sequence, read N- to C-terminus: Aspartyl/glutamyl-tRNA(Asn/Gln) amidotransferase subunit B (498 aa).

It belongs to the GatB/GatE family. GatB subfamily. As to quaternary structure, heterotrimer of A, B and C subunits.

It carries out the reaction L-glutamyl-tRNA(Gln) + L-glutamine + ATP + H2O = L-glutaminyl-tRNA(Gln) + L-glutamate + ADP + phosphate + H(+). It catalyses the reaction L-aspartyl-tRNA(Asn) + L-glutamine + ATP + H2O = L-asparaginyl-tRNA(Asn) + L-glutamate + ADP + phosphate + 2 H(+). Its function is as follows. Allows the formation of correctly charged Asn-tRNA(Asn) or Gln-tRNA(Gln) through the transamidation of misacylated Asp-tRNA(Asn) or Glu-tRNA(Gln) in organisms which lack either or both of asparaginyl-tRNA or glutaminyl-tRNA synthetases. The reaction takes place in the presence of glutamine and ATP through an activated phospho-Asp-tRNA(Asn) or phospho-Glu-tRNA(Gln). This is Aspartyl/glutamyl-tRNA(Asn/Gln) amidotransferase subunit B from Erythrobacter litoralis (strain HTCC2594).